A 218-amino-acid polypeptide reads, in one-letter code: Adenylate kinase (218 aa).

10-15 (GAGKGT) contributes to the ATP binding site. Residues 30 to 59 (STGDMLRAAVKAGTPLGIEAKKVMDAGGLM) are NMP. AMP contacts are provided by residues Thr31, Arg36, 57–59 (GLM), 85–88 (GYPR), and Gln92. The LID stretch occupies residues 122–159 (GRWVHLASGRSYNTQSNPPKVAGQDDITGEALIQRDDD). ATP is bound by residues Arg123 and 132–133 (SY). Residues Arg156 and Arg167 each contribute to the AMP site. Gly203 serves as a coordination point for ATP.

This sequence belongs to the adenylate kinase family. As to quaternary structure, monomer.

The protein resides in the cytoplasm. The enzyme catalyses AMP + ATP = 2 ADP. It participates in purine metabolism; AMP biosynthesis via salvage pathway; AMP from ADP: step 1/1. Catalyzes the reversible transfer of the terminal phosphate group between ATP and AMP. Plays an important role in cellular energy homeostasis and in adenine nucleotide metabolism. In Bordetella avium (strain 197N), this protein is Adenylate kinase.